The following is a 547-amino-acid chain: Inactive delta-guaiene synthase (547 aa).

Asp299, Asp303, and Asp444 together coordinate Mg(2+). The DDXXD motif motif lies at 299-303 (DDTYD).

The protein belongs to the terpene synthase family. The cofactor is Mg(2+).

This chain is Inactive delta-guaiene synthase (C1), found in Aquilaria crassna (Eagle wood).